A 187-amino-acid chain; its full sequence is Homeobox expressed in ES cells 1-B (187 aa).

The segment at residues 110–169 (GRRPRTAFTRSQIEILENVFRVNSYPGIDVREELASKLALDEDRIQIWFQNRRAKLKRSH) is a DNA-binding region (homeobox).

This sequence belongs to the ANF homeobox family. In terms of assembly, the N-terminus interacts with the LIM 2 domain of zyx. As to expression, first expressed at a low level in the late blastula stage (stage 9) in most cells of the animal half of the embryo. Following this, predominantly expressed in two zones; the dorsal blastopore lip (Spemann organizer) at the beginning of gastrulation, and subsequently in the anterior part of the neural anlage (the region of future forebrain).

The protein localises to the nucleus. Functionally, regulates the earliest stages of development of the anterior neural plate. Plays a role in forebrain development by inhibiting the expression of otx2 and pax6 in the rostral region of the anterior neural plate. Necessary for both neural differentiation and neural patterning. Controls Spemann organizer development. May act as a transcriptional repressor. The protein is Homeobox expressed in ES cells 1-B (hesx1-b) of Xenopus laevis (African clawed frog).